The following is a 143-amino-acid chain: Synuclein (143 aa).

3 repeat units span residues 20-30 (EKTKQGVQDAA), 31-41 (EKTKQGVQDAA), and 42-52 (EKTKEGVMYVG). The segment at 20–78 (EKTKQGVQDAAEKTKQGVQDAAEKTKEGVMYVGTKTKEGVVQSVNTVTEKTKEQANVVG) is 5 X 11 AA tandem repeats of [EGST]-K-T-K-[EQ]-[GQ]-[VA]-X(4). A 4; approximate repeat occupies 53–67 (TKTKEGVVQSVNTVT). The stretch at 68-78 (EKTKEQANVVG) is repeat 5. The segment at 113–143 (REIPAEQVAEGKQTTQEPLVEATEATEETGK) is disordered.

It belongs to the synuclein family. In terms of tissue distribution, nervous system tissue. Found in the electric lobe, the brain and the spinal cord.

Its subcellular location is the nucleus. Functionally, may have a role in synaptic regulation or signal transduction. This Tetronarce californica (Pacific electric ray) protein is Synuclein.